A 1202-amino-acid polypeptide reads, in one-letter code: Caffeine-induced protein 16 (1202 aa).

Residues 1105–1159 (NIALLLRGFFCYYGLTTQYSFDWEAYMIDISSSQLKRKSTEFKDCPFVVLDPFLK) enclose the PAP-associated domain.

This chain is Caffeine-induced protein 16 (cid16), found in Schizosaccharomyces pombe (strain 972 / ATCC 24843) (Fission yeast).